The sequence spans 354 residues: Uroporphyrinogen decarboxylase (354 aa).

Residues 27–31 (RQAGR), aspartate 77, tyrosine 154, serine 209, and histidine 327 each bind substrate.

It belongs to the uroporphyrinogen decarboxylase family. Homodimer.

The protein localises to the cytoplasm. It carries out the reaction uroporphyrinogen III + 4 H(+) = coproporphyrinogen III + 4 CO2. It participates in porphyrin-containing compound metabolism; protoporphyrin-IX biosynthesis; coproporphyrinogen-III from 5-aminolevulinate: step 4/4. Functionally, catalyzes the decarboxylation of four acetate groups of uroporphyrinogen-III to yield coproporphyrinogen-III. The sequence is that of Uroporphyrinogen decarboxylase from Saccharophagus degradans (strain 2-40 / ATCC 43961 / DSM 17024).